A 690-amino-acid chain; its full sequence is Translation factor GUF1, mitochondrial (690 aa).

Positions 40–68 are disordered; the sequence is SVTVPAARRHNSTKSTNSTTSTNSTTATS. Residues 52–68 are compositionally biased toward low complexity; it reads TKSTNSTTSTNSTTATS. A tr-type G domain is found at 89-272; that stretch reads ERYRNFCIVA…AVIKKMPAPV (184 aa). Residues 98–105, 165–169, and 219–222 contribute to the GTP site; these read AHIDHGKS, DTPGH, and NKID.

Belongs to the TRAFAC class translation factor GTPase superfamily. Classic translation factor GTPase family. LepA subfamily.

The protein resides in the mitochondrion inner membrane. It carries out the reaction GTP + H2O = GDP + phosphate + H(+). Promotes mitochondrial protein synthesis. May act as a fidelity factor of the translation reaction, by catalyzing a one-codon backward translocation of tRNAs on improperly translocated ribosomes. Binds to mitochondrial ribosomes in a GTP-dependent manner. In Sordaria macrospora (strain ATCC MYA-333 / DSM 997 / K(L3346) / K-hell), this protein is Translation factor GUF1, mitochondrial.